Consider the following 489-residue polypeptide: MSAAEPALAPLSPGAPVLVAGGGITGRAVLAALRRFGAAPTLCDDDPATLRGYVDSGVDTVSTSAAAERISRYALVVTSPGFAPTAPLPLAAAAAGVPVWGDVELAWRLDAAGHYGPPRRWLVVTGTNGKTTTTSMLHAMLTAAGRRSLLCGNIGSPVLDVLDQPAELLAVELSSFQLHWAPSLRPEGGAVLNIAEDHLDWHGTLADYAAAKARVLDGRVAVVGLDDSRAAALLSTARAPVRVGFRLGEPAAGELGVRGGQLVDRAFADDLTLLPVDSIPVPGPVGVLDALAAAALARCVDVPASPIAEAIVSFRVGRHRAEVVAVADGITYVDDSKATNPHAAEASVLAYPRVVWIAGGLLKGASVDAVVARMASRLVGAVLIGRDRREVAEALSRHAPDVPVVHVVTGEDAGMDATPVVFGANVTKVKHLGGDLGAAVMSAAVAAARDLAKPGDTVLLAPAAASFDQFAGYADRGDAFAAAVRAAIR.

Glycine 126 to threonine 132 lines the ATP pocket.

It belongs to the MurCDEF family.

It localises to the cytoplasm. The enzyme catalyses UDP-N-acetyl-alpha-D-muramoyl-L-alanine + D-glutamate + ATP = UDP-N-acetyl-alpha-D-muramoyl-L-alanyl-D-glutamate + ADP + phosphate + H(+). It participates in cell wall biogenesis; peptidoglycan biosynthesis. Functionally, cell wall formation. Catalyzes the addition of glutamate to the nucleotide precursor UDP-N-acetylmuramoyl-L-alanine (UMA). The sequence is that of UDP-N-acetylmuramoylalanine--D-glutamate ligase from Mycobacterium avium (strain 104).